The chain runs to 106 residues: Large ribosomal subunit protein eL42 (106 aa).

It belongs to the eukaryotic ribosomal protein eL42 family. In terms of assembly, component of the large ribosomal subunit.

It localises to the cytoplasm. Component of the large ribosomal subunit. The ribosome is a large ribonucleoprotein complex responsible for the synthesis of proteins in the cell. The chain is Large ribosomal subunit protein eL42 (RPL36A) from Papio anubis (Olive baboon).